Here is a 603-residue protein sequence, read N- to C-terminus: UvrABC system protein C (603 aa).

Positions 13-92 (SSPGVYLMKD…IKQHHPKYNV (80 aa)) constitute a GIY-YIG domain. The UVR domain occupies 205–240 (EEVVKDLEKVIQKASDNLEFEQAANYYRTLSLIKQA).

It belongs to the UvrC family. Interacts with UvrB in an incision complex.

The protein localises to the cytoplasm. The UvrABC repair system catalyzes the recognition and processing of DNA lesions. UvrC both incises the 5' and 3' sides of the lesion. The N-terminal half is responsible for the 3' incision and the C-terminal half is responsible for the 5' incision. The polypeptide is UvrABC system protein C (Chlamydia pneumoniae (Chlamydophila pneumoniae)).